A 910-amino-acid polypeptide reads, in one-letter code: Protein translocase subunit SecA (910 aa).

ATP is bound by residues Q86, 104–108 (GEGKT), and D499. 4 residues coordinate Zn(2+): C894, C896, C905, and H906.

This sequence belongs to the SecA family. In terms of assembly, monomer and homodimer. Part of the essential Sec protein translocation apparatus which comprises SecA, SecYEG and auxiliary proteins SecDF-YajC and YidC. It depends on Zn(2+) as a cofactor.

It localises to the cell inner membrane. The protein resides in the cytoplasm. It carries out the reaction ATP + H2O + cellular proteinSide 1 = ADP + phosphate + cellular proteinSide 2.. In terms of biological role, part of the Sec protein translocase complex. Interacts with the SecYEG preprotein conducting channel. Has a central role in coupling the hydrolysis of ATP to the transfer of proteins into and across the cell membrane, serving both as a receptor for the preprotein-SecB complex and as an ATP-driven molecular motor driving the stepwise translocation of polypeptide chains across the membrane. This is Protein translocase subunit SecA from Rickettsia bellii (strain RML369-C).